The following is a 201-amino-acid chain: Potassium-transporting ATPase KdpC subunit (201 aa).

A helical membrane pass occupies residues valine 10–isoleucine 30.

This sequence belongs to the KdpC family. The system is composed of three essential subunits: KdpA, KdpB and KdpC.

The protein localises to the cell inner membrane. Functionally, part of the high-affinity ATP-driven potassium transport (or Kdp) system, which catalyzes the hydrolysis of ATP coupled with the electrogenic transport of potassium into the cytoplasm. This subunit acts as a catalytic chaperone that increases the ATP-binding affinity of the ATP-hydrolyzing subunit KdpB by the formation of a transient KdpB/KdpC/ATP ternary complex. The protein is Potassium-transporting ATPase KdpC subunit of Methylorubrum extorquens (strain PA1) (Methylobacterium extorquens).